A 510-amino-acid polypeptide reads, in one-letter code: NAD(P)H-quinone oxidoreductase subunit 2 A, chloroplastic (510 aa).

14 helical membrane passes run 31–51, 59–79, 99–119, 124–144, 149–169, 184–204, 229–249, 261–281, 295–315, 323–343, 354–374, 395–415, 418–438, and 484–504; these read FIFP…IDLT, WFYF…LFRW, IFQF…VEYI, MAIT…MFLC, LITI…LSGY, LLMG…LYGL, ISIA…LAPF, PTPV…ALAT, WHLL…LLAI, MLAY…IVGD, YMLF…LFGL, ALSL…AGFF, LYLF…IGLL, and MTVC…ILAI.

This sequence belongs to the complex I subunit 2 family. NDH is composed of at least 16 different subunits, 5 of which are encoded in the nucleus.

It localises to the plastid. Its subcellular location is the chloroplast thylakoid membrane. It catalyses the reaction a plastoquinone + NADH + (n+1) H(+)(in) = a plastoquinol + NAD(+) + n H(+)(out). It carries out the reaction a plastoquinone + NADPH + (n+1) H(+)(in) = a plastoquinol + NADP(+) + n H(+)(out). Its function is as follows. NDH shuttles electrons from NAD(P)H:plastoquinone, via FMN and iron-sulfur (Fe-S) centers, to quinones in the photosynthetic chain and possibly in a chloroplast respiratory chain. The immediate electron acceptor for the enzyme in this species is believed to be plastoquinone. Couples the redox reaction to proton translocation, and thus conserves the redox energy in a proton gradient. The chain is NAD(P)H-quinone oxidoreductase subunit 2 A, chloroplastic from Oryza sativa subsp. japonica (Rice).